Reading from the N-terminus, the 315-residue chain is tRNA-dihydrouridine(16) synthase (315 aa).

Residues proline 7–glutamate 9 and glutamine 68 each bind FMN. Cysteine 98 serves as the catalytic Proton donor. Residues lysine 139, asparagine 200–glutamate 202, and glycine 224–arginine 225 contribute to the FMN site.

It belongs to the Dus family. DusC subfamily. FMN serves as cofactor.

The catalysed reaction is 5,6-dihydrouridine(16) in tRNA + NADP(+) = uridine(16) in tRNA + NADPH + H(+). The enzyme catalyses 5,6-dihydrouridine(16) in tRNA + NAD(+) = uridine(16) in tRNA + NADH + H(+). Its function is as follows. Catalyzes the synthesis of 5,6-dihydrouridine (D), a modified base found in the D-loop of most tRNAs, via the reduction of the C5-C6 double bond in target uridines. Specifically modifies U16 in tRNAs. The sequence is that of tRNA-dihydrouridine(16) synthase from Shigella flexneri.